The following is a 107-amino-acid chain: SH3 domain-binding glutamic acid-rich-like protein 2 (107 aa).

The SH3-binding signature appears at 61–67 (QGNPLPP).

This sequence belongs to the SH3BGR family.

The protein localises to the nucleus. The chain is SH3 domain-binding glutamic acid-rich-like protein 2 (SH3BGRL2) from Pongo abelii (Sumatran orangutan).